A 198-amino-acid chain; its full sequence is Large ribosomal subunit protein bL25 (198 aa).

Belongs to the bacterial ribosomal protein bL25 family. CTC subfamily. As to quaternary structure, part of the 50S ribosomal subunit; part of the 5S rRNA/L5/L18/L25 subcomplex. Contacts the 5S rRNA. Binds to the 5S rRNA independently of L5 and L18.

Functionally, this is one of the proteins that binds to the 5S RNA in the ribosome where it forms part of the central protuberance. This Phocaeicola vulgatus (strain ATCC 8482 / DSM 1447 / JCM 5826 / CCUG 4940 / NBRC 14291 / NCTC 11154) (Bacteroides vulgatus) protein is Large ribosomal subunit protein bL25.